The primary structure comprises 120 residues: Large ribosomal subunit protein uL22 (120 aa).

It belongs to the universal ribosomal protein uL22 family. As to quaternary structure, part of the 50S ribosomal subunit.

This protein binds specifically to 23S rRNA; its binding is stimulated by other ribosomal proteins, e.g. L4, L17, and L20. It is important during the early stages of 50S assembly. It makes multiple contacts with different domains of the 23S rRNA in the assembled 50S subunit and ribosome. In terms of biological role, the globular domain of the protein is located near the polypeptide exit tunnel on the outside of the subunit, while an extended beta-hairpin is found that lines the wall of the exit tunnel in the center of the 70S ribosome. This Acaryochloris marina (strain MBIC 11017) protein is Large ribosomal subunit protein uL22.